Reading from the N-terminus, the 243-residue chain is Protein IN2-1 homolog A (243 aa).

Residues 31 to 112 enclose the GST N-terminal domain; the sequence is GTTRLYICYF…YIDSHFEGPA (82 aa). Glutathione-binding positions include K70, V84, and 96–97; that span reads ES. The 124-residue stretch at 117–240 folds into the GST C-terminal domain; sequence DPEKRQFADE…YLLDLAKTHL (124 aa).

The protein belongs to the GST superfamily. HSP26 family.

This is Protein IN2-1 homolog A from Oryza sativa subsp. japonica (Rice).